The sequence spans 175 residues: ATP synthase subunit b 1 (175 aa).

The chain crosses the membrane as a helical span at residues 26–48 (IINLAIIIGVLYVYGSKFIGNIL).

It belongs to the ATPase B chain family. As to quaternary structure, F-type ATPases have 2 components, F(1) - the catalytic core - and F(0) - the membrane proton channel. F(1) has five subunits: alpha(3), beta(3), gamma(1), delta(1), epsilon(1). F(0) has four main subunits: a(1), b(1), b'(1) and c(10-14). The alpha and beta chains form an alternating ring which encloses part of the gamma chain. F(1) is attached to F(0) by a central stalk formed by the gamma and epsilon chains, while a peripheral stalk is formed by the delta, b and b' chains.

The protein localises to the cellular thylakoid membrane. F(1)F(0) ATP synthase produces ATP from ADP in the presence of a proton or sodium gradient. F-type ATPases consist of two structural domains, F(1) containing the extramembraneous catalytic core and F(0) containing the membrane proton channel, linked together by a central stalk and a peripheral stalk. During catalysis, ATP synthesis in the catalytic domain of F(1) is coupled via a rotary mechanism of the central stalk subunits to proton translocation. In terms of biological role, component of the F(0) channel, it forms part of the peripheral stalk, linking F(1) to F(0). The protein is ATP synthase subunit b 1 of Picosynechococcus sp. (strain ATCC 27264 / PCC 7002 / PR-6) (Agmenellum quadruplicatum).